A 1215-amino-acid polypeptide reads, in one-letter code: DNA-directed RNA polymerase subunit beta' (1215 aa).

Residues Cys-60, Cys-62, Cys-75, and Cys-78 each coordinate Zn(2+). Mg(2+) is bound by residues Asp-449, Asp-451, and Asp-453. Zn(2+)-binding residues include Cys-818, Cys-892, Cys-899, and Cys-902.

It belongs to the RNA polymerase beta' chain family. In terms of assembly, the RNAP catalytic core consists of 2 alpha, 1 beta, 1 beta' and 1 omega subunit. When a sigma factor is associated with the core the holoenzyme is formed, which can initiate transcription. The cofactor is Mg(2+). Zn(2+) serves as cofactor.

The catalysed reaction is RNA(n) + a ribonucleoside 5'-triphosphate = RNA(n+1) + diphosphate. In terms of biological role, DNA-dependent RNA polymerase catalyzes the transcription of DNA into RNA using the four ribonucleoside triphosphates as substrates. The sequence is that of DNA-directed RNA polymerase subunit beta' from Limosilactobacillus fermentum (strain NBRC 3956 / LMG 18251) (Lactobacillus fermentum).